A 347-amino-acid polypeptide reads, in one-letter code: D-alanine--D-alanine ligase (347 aa).

Residues 134 to 332 (KLYAKDLGIK…LAQSLPKTPK (199 aa)) enclose the ATP-grasp domain. 161–216 (LINFNFPFIIKPNSAGSSLGVSVVKEEKELNYALDSAFEYSKEVLIEPFIQGVKEY) is an ATP binding site. D288, E300, and N302 together coordinate Mg(2+).

The protein belongs to the D-alanine--D-alanine ligase family. Mg(2+) is required as a cofactor. Requires Mn(2+) as cofactor.

It localises to the cytoplasm. The enzyme catalyses 2 D-alanine + ATP = D-alanyl-D-alanine + ADP + phosphate + H(+). Its pathway is cell wall biogenesis; peptidoglycan biosynthesis. Its function is as follows. Cell wall formation. This Helicobacter pylori (strain HPAG1) protein is D-alanine--D-alanine ligase.